Consider the following 425-residue polypeptide: cAMP/cGMP-dependent 3',5'-cAMP/cGMP phosphodiesterase 7 (425 aa).

Positions 1 to 17 are cleaved as a signal peptide; it reads MKYLILILIFFIEINNG.

This sequence belongs to the cyclic nucleotide phosphodiesterase class-II family.

It localises to the secreted. Its subcellular location is the extracellular space. It is found in the cell surface. The catalysed reaction is 3',5'-cyclic AMP + H2O = AMP + H(+). It catalyses the reaction 3',5'-cyclic GMP + H2O = GMP + H(+). Inhibited by dithiotreitol (DTT). Functionally, phosphodiesterase with dual cAMP/cGMP specificity. However, displays a preference for cAMP over cGMP. Seems to regulate cAMP/cGMP concentration especially during cell aggregation. The sequence is that of cAMP/cGMP-dependent 3',5'-cAMP/cGMP phosphodiesterase 7 (pde7) from Dictyostelium discoideum (Social amoeba).